The sequence spans 263 residues: Histidine racemase (263 aa).

Residue cysteine 67 is the Proton acceptor of the active site. The active-site Proton donor is the cysteine 209.

Belongs to the histidine racemase family. In terms of assembly, homodimer.

It catalyses the reaction L-histidine = D-histidine. Functionally, cofactor-independent isomerase that catalyzes the reversible conversion of L-histidine to D-histidine. May play a role in growth of F.nucleatum. In Fusobacterium nucleatum subsp. nucleatum (strain ATCC 23726 / VPI 4351), this protein is Histidine racemase.